A 191-amino-acid chain; its full sequence is Large ribosomal subunit protein uL6A (191 aa).

It belongs to the universal ribosomal protein uL6 family. In terms of assembly, component of the large ribosomal subunit (LSU). Mature yeast ribosomes consist of a small (40S) and a large (60S) subunit. The 40S small subunit contains 1 molecule of ribosomal RNA (18S rRNA) and 33 different proteins (encoded by 57 genes). The large 60S subunit contains 3 rRNA molecules (25S, 5.8S and 5S rRNA) and 46 different proteins (encoded by 81 genes). uL6 lines the binding pocket for eukaryotic elongation factor 2 (eEF2).

The protein resides in the cytoplasm. In terms of biological role, component of the ribosome, a large ribonucleoprotein complex responsible for the synthesis of proteins in the cell. The small ribosomal subunit (SSU) binds messenger RNAs (mRNAs) and translates the encoded message by selecting cognate aminoacyl-transfer RNA (tRNA) molecules. The large subunit (LSU) contains the ribosomal catalytic site termed the peptidyl transferase center (PTC), which catalyzes the formation of peptide bonds, thereby polymerizing the amino acids delivered by tRNAs into a polypeptide chain. The nascent polypeptides leave the ribosome through a tunnel in the LSU and interact with protein factors that function in enzymatic processing, targeting, and the membrane insertion of nascent chains at the exit of the ribosomal tunnel. This Saccharomyces cerevisiae (strain ATCC 204508 / S288c) (Baker's yeast) protein is Large ribosomal subunit protein uL6A.